The primary structure comprises 96 residues: Small ribosomal subunit protein bS20 (96 aa).

Residues 1 to 27 form a disordered region; sequence MAKQEVAAKKVKRPTALKRDLQNKKKR.

The protein belongs to the bacterial ribosomal protein bS20 family.

Its function is as follows. Binds directly to 16S ribosomal RNA. The sequence is that of Small ribosomal subunit protein bS20 from Protochlamydia amoebophila (strain UWE25).